The sequence spans 291 residues: Small ribosomal subunit protein uS2 (291 aa).

Positions 254-291 (RTSNRDNKNNKNNNNTDNTDNAASIKEEDLIGGSNNEN) are disordered. Residues 263–277 (NKNNNNTDNTDNAAS) are compositionally biased toward low complexity.

Belongs to the universal ribosomal protein uS2 family.

The sequence is that of Small ribosomal subunit protein uS2 from Ehrlichia canis (strain Jake).